The sequence spans 571 residues: Potassium-transporting ATPase potassium-binding subunit (571 aa).

11 consecutive transmembrane segments (helical) span residues 3–23, 64–84, 135–155, 179–199, 254–274, 284–304, 330–350, 357–376, 421–441, 488–508, and 527–547; these read LIGW…VKPL, LGYG…LYAI, LGLT…AVAL, LYVL…QGMP, LANL…TNVF, GWAI…VTYA, FGIV…CGAV, FTAL…EIIV, MLAI…ATVL, LALG…AIAG, and GGLF…LTFF.

The protein belongs to the KdpA family. As to quaternary structure, the system is composed of three essential subunits: KdpA, KdpB and KdpC.

The protein localises to the cell inner membrane. In terms of biological role, part of the high-affinity ATP-driven potassium transport (or Kdp) system, which catalyzes the hydrolysis of ATP coupled with the electrogenic transport of potassium into the cytoplasm. This subunit binds the periplasmic potassium ions and delivers the ions to the membrane domain of KdpB through an intramembrane tunnel. The polypeptide is Potassium-transporting ATPase potassium-binding subunit (Methylorubrum populi (strain ATCC BAA-705 / NCIMB 13946 / BJ001) (Methylobacterium populi)).